The chain runs to 814 residues: Leucine--tRNA ligase (814 aa).

A 'HIGH' region motif is present at residues 42 to 52 (PYPSGNLHIGH). A 'KMSKS' region motif is present at residues 582–586 (KMSKS). Lys585 is an ATP binding site.

This sequence belongs to the class-I aminoacyl-tRNA synthetase family.

Its subcellular location is the cytoplasm. It catalyses the reaction tRNA(Leu) + L-leucine + ATP = L-leucyl-tRNA(Leu) + AMP + diphosphate. The chain is Leucine--tRNA ligase from Herpetosiphon aurantiacus (strain ATCC 23779 / DSM 785 / 114-95).